The chain runs to 236 residues: Alpha-S2-casein (236 aa).

An N-terminal signal peptide occupies residues 1–15; sequence MKFFIFTCLLAVALA. Phosphoserine is present on residues serine 23, serine 24, serine 25, serine 28, serine 47, serine 80, serine 81, serine 82, serine 85, serine 157, and serine 169. The tract at residues 72–93 is disordered; sequence PTEVYSSSSSSEESAKFPTERE. Over residues 84-93 the composition is skewed to basic and acidic residues; that stretch reads ESAKFPTERE.

Belongs to the alpha-casein family. Post-translationally, there are at least three different forms found in milk, with varying degrees of phosphorylation. These include form 10-P which is phosphorylated at ten sites that have not been determined, form 11-P which is phosphorylated at eleven sites and form 12-P which is phosphorylated at twelve sites. As to expression, mammary gland specific. Secreted in milk.

It is found in the secreted. In terms of biological role, important role in the capacity of milk to transport calcium phosphate. This chain is Alpha-S2-casein, found in Equus asinus (Donkey).